Here is a 562-residue protein sequence, read N- to C-terminus: Urocanate hydratase (562 aa).

NAD(+) is bound by residues 52-53 (GG), Q130, 176-178 (GMG), E196, R201, 242-243 (NA), 263-267 (QTSAH), 273-274 (YL), and Y322. C410 is a catalytic residue. Position 492 (G492) interacts with NAD(+).

It belongs to the urocanase family. Requires NAD(+) as cofactor.

The protein resides in the cytoplasm. The enzyme catalyses 4-imidazolone-5-propanoate = trans-urocanate + H2O. The protein operates within amino-acid degradation; L-histidine degradation into L-glutamate; N-formimidoyl-L-glutamate from L-histidine: step 2/3. Catalyzes the conversion of urocanate to 4-imidazolone-5-propionate. The protein is Urocanate hydratase of Shewanella pealeana (strain ATCC 700345 / ANG-SQ1).